The sequence spans 304 residues: MNYLGGFFMKNLLSMEDLTNEEILSLVKRALELKKRAENKKRNDLFVANLFFENSTRTKKSFEVAEKKLNLNVVDFEVSTSSVQKGETLYDTCKTLEMIGINMLVIRHSENEYYKQLENLKIPIINGGDGSGEHPSQCLLDIMTIYETYGKFDGLNIIIVGDIKNSRVARSNKKALTRLGAKVTFVAPEIWKDESLGEFVNFDDVIDKVDICMLLRVQHERHTDSKEKREFSKENYHKSFGLTEERYKRLKEGAIIMHPAPVNRDVEIADSLVESEKSRIFEQMRNGMFMRQAILEYIIEKNKL.

Positions 57 and 58 each coordinate carbamoyl phosphate. Lys-85 is a binding site for L-aspartate. The carbamoyl phosphate site is built by Arg-107, His-134, and Gln-137. 2 residues coordinate L-aspartate: Arg-167 and Arg-216. Residues Ala-260 and Pro-261 each contribute to the carbamoyl phosphate site.

It belongs to the aspartate/ornithine carbamoyltransferase superfamily. ATCase family. Heterododecamer (2C3:3R2) of six catalytic PyrB chains organized as two trimers (C3), and six regulatory PyrI chains organized as three dimers (R2).

The catalysed reaction is carbamoyl phosphate + L-aspartate = N-carbamoyl-L-aspartate + phosphate + H(+). It functions in the pathway pyrimidine metabolism; UMP biosynthesis via de novo pathway; (S)-dihydroorotate from bicarbonate: step 2/3. Functionally, catalyzes the condensation of carbamoyl phosphate and aspartate to form carbamoyl aspartate and inorganic phosphate, the committed step in the de novo pyrimidine nucleotide biosynthesis pathway. In Fusobacterium nucleatum subsp. nucleatum (strain ATCC 25586 / DSM 15643 / BCRC 10681 / CIP 101130 / JCM 8532 / KCTC 2640 / LMG 13131 / VPI 4355), this protein is Aspartate carbamoyltransferase catalytic subunit.